A 452-amino-acid polypeptide reads, in one-letter code: MMITLRKLPLAVAVAAGVMSAQAMAVDFHGYARSGIGWTGSGGEQQCFQVTGAQSKYRLGNECETYAELKLGQEVWKEGDKSFYFDTNVAYSVNQQNDWESTDPAFREANVQGKNLIEWLPGSTIWAGKRFYQRHDVHMIDFYYWDISGPGAGIENIDLGFGKLSLAATRSTEAGGSYTFSSQNIYDEVKDTANDVFDVRLAGLQTNPDGVLELGVDYGRANTTDGYKLADGASKDGWMFTAEHTQSMLKGYNKFVVQYATDAMTTQGKGQARGSDGSSSFTEELPDGTKINYANKVINNNGNMWRILDHGAISLGDKWDLMYVGMYQNIDWDNNLGTEWWTVGVRPMYKWTPIMSTLLEVGYDNVKSQQTGDRNNQYKITLAQQWQAGDSIWSRPAIRIFATYAKWDEKWGYIKDGDNISRYAAATNSGISTNSRGDSDEWTFGAQMEIWW.

A signal peptide spans 1–25 (MMITLRKLPLAVAVAAGVMSAQAMA).

Belongs to the porin LamB (TC 1.B.3) family. In terms of assembly, homotrimer formed of three 18-stranded antiparallel beta-barrels, containing three independent channels.

The protein resides in the cell outer membrane. The catalysed reaction is beta-maltose(in) = beta-maltose(out). Involved in the transport of maltose and maltodextrins. The sequence is that of Maltoporin from Salmonella heidelberg (strain SL476).